The primary structure comprises 557 residues: Eudesmanediol synthase (557 aa).

Residues D310 and D314 each contribute to the Mg(2+) site. 3 residues coordinate substrate: D310, D314, and R450. A DDXXD motif motif is present at residues 310 to 314; the sequence is DDTFD. Mg(2+) contacts are provided by N453 and S457.

The protein belongs to the terpene synthase family. In terms of assembly, monomer. Mg(2+) is required as a cofactor. Mn(2+) serves as cofactor.

It localises to the cytoplasm. It catalyses the reaction (2E,6E)-farnesyl diphosphate + 2 H2O = 7-epi-ent-eudesmane-5,11-diol + diphosphate. It functions in the pathway secondary metabolite biosynthesis; terpenoid biosynthesis. Component of the volatile terpenes biosynthesis pathways. Dihydroxylated sesquiterpenoid synthase that generates dually hydroxylated products directly from (E,E)-farnesyl diphosphate, primarily eudesmane-2,11-diol, along with two closely related structural isomers. The chain is Eudesmanediol synthase from Zea mays (Maize).